We begin with the raw amino-acid sequence, 311 residues long: Heme A synthase (311 aa).

At 1–6 (MQRFIK) the chain is on the cytoplasmic side. A helical transmembrane segment spans residues 7–27 (WLAVITSLDLLIVLLGGALVT). Over 28–62 (KTGSGQGCGKSWPLCNGEFVPSNLSMETIIELSHR) the chain is Extracellular. Cys35 and Cys42 form a disulfide bridge. Glu58 is a catalytic residue. Heme o is bound at residue His61. A helical membrane pass occupies residues 63–83 (LTSGSAGILVTLLCILSWKYY). Residues 84–91 (KHVRETKT) are Cytoplasmic-facing. The helical transmembrane segment at 92-112 (LAILSFVFLVAQALMGAAAVV) threads the bilayer. The Extracellular portion of the chain corresponds to 113–121 (WGQMPAVLA). Residues 122 to 142 (IHFGISLISFASVILLTCLIF) traverse the membrane as a helical segment. His123 contacts heme o. Over 143–159 (EIDQKFDARSLIMDKKM) the chain is Cytoplasmic. The chain crosses the membrane as a helical span at residues 160-180 (KFHIYGVTIYSYIVVYTGALV). The Extracellular segment spans residues 181-211 (RHERASLACPDFPLCSKNRPMPTQLHEWVQM). A disulfide bridge connects residues Cys189 and Cys195. A helical membrane pass occupies residues 212–232 (GHRVAAMLIFAWILYAMILAI). His213 contacts heme b. Topologically, residues 233–243 (RHYKQQPVVYW) are cytoplasmic. A helical transmembrane segment spans residues 244–264 (GWIISFILVTLQAIVGILVVF). At 265 to 271 (TNASLSM) the chain is on the extracellular side. The chain crosses the membrane as a helical span at residues 272–292 (ALLHSLFISCLFAVLCYLVML). Heme b is bound at residue His275. Over 293 to 311 (GTRSKVNAKEAASISKQTK) the chain is Cytoplasmic.

Belongs to the COX15/CtaA family. Type 1 subfamily. Interacts with CtaB. Heme b serves as cofactor.

It is found in the cell membrane. The enzyme catalyses Fe(II)-heme o + 2 A + H2O = Fe(II)-heme a + 2 AH2. Its pathway is porphyrin-containing compound metabolism; heme A biosynthesis; heme A from heme O: step 1/1. Catalyzes the conversion of heme O to heme A by two successive hydroxylations of the methyl group at C8. The first hydroxylation forms heme I, the second hydroxylation results in an unstable dihydroxymethyl group, which spontaneously dehydrates, resulting in the formyl group of heme A. The polypeptide is Heme A synthase (Bacillus cereus (strain AH187)).